The sequence spans 197 residues: Thymidylate kinase (197 aa).

Residue 7–14 (GIDGSGKS) coordinates ATP.

The protein belongs to the thymidylate kinase family.

The catalysed reaction is dTMP + ATP = dTDP + ADP. Phosphorylation of dTMP to form dTDP in both de novo and salvage pathways of dTTP synthesis. The sequence is that of Thymidylate kinase from Thermotoga petrophila (strain ATCC BAA-488 / DSM 13995 / JCM 10881 / RKU-1).